The sequence spans 248 residues: uncharacterized protein (248 aa).

A signal peptide spans 1 to 26 (MVAPRISPKIVLVGFALFAIISASLA).

This is an uncharacterized protein from Acanthamoeba polyphaga mimivirus (APMV).